A 1494-amino-acid chain; its full sequence is MIFSQGSSPIKGDFSKIKFSIASPESILAHSRGEVLKPETINYRTFKPERDGLMCEKIFGPTKDWECYCGKYKRVRYKGIICDRCGVEVTTKNVRRERMGHISLAVPVVHTWFFRSVPSKIGALLDLSTKELERIIYYEVYVVINPGEPGEKQGIKKFDRLTEEQYFQIITEYEDNQDLEDNDPAKFVAKMGGEAIHTLLKGLNLDEIAVNLRKVLKESGSEQKRADALKRLKVVESFRKSYEPQKRTRKKSTGLFPEEDSPELYIYEGNKPEYMVMEVVPVIPPELRPLVPLEGGRFATSDLNDLYRRVIIRNNRLKKLIDIRAPEVILRNEKRMLQEAVDALFDNSRKANAVKTGESNRPLKSLSDALKGKQGRFRQNLLGKRVDYSGRSVIVVGPELQLHQCGLPKSMAIELFQPFVIRRLVERGIAKSVKSAKKLIDKKDPVVWDVLEKVIDGRPVLLNRAPTLHRLGIQAFQPTLIEGKAIQLHPLVCTAFNADFDGDQMAVHVPLSQEAQLEASLLMLSSHNLILPQSGKPVTVPSQDMVLGMYYLTKARFGDVGQGQLFYSMEEVIIAYNEERAGLHAQIFVKYDGKVDQVSDPVRLVDTLVPEEQAERRAWLKSQIEQKKVLVTTVGRVIFNQHMPEKIGFINKLINKKVAKELIAHLSSQVGNVETAQFLDNIKAVGFGYAMRGGLSIGLSDAIVPETKVKHIKNAQRDSAKVVKEYNRGTLTDNERYNQIVDVWQKTSNLVADESYQKLKNDRDGFNPLYMMLDSGARGSREQVRQLTGMRGLIARPQKSMSGQPGEIIENPIISNLKEGLTVLEYFISTHGARKGLSDTSLKTADAGYLTRRLHDVAQDVIVTIDDCGTTRGLHVERNIEEETSGQIKFREKIKGRVAARDIVDVINDKVVVKAGEIITDELAAAIQDNIGVEEAEIRSVLTCESKVGICSKCYGTNLSVHKLVEMGEAVGVIAAQSIGEPGTQLTLRTFHQGGAAQGGISETETKAFYEGQVELEDVKSVEHSIITEDGIEETRQIVIQKNGKLNIIDPDSGKVLKRYVVPHGAHINVENGQMVRKDQVLFSSEPNSTQILAEMPGFAKFIDIEKGVTYKEEVDPQTGFAQHTIINWRSKLRASETREPRIAIVSESGEIKKTYPVPIKSNLYVEDGQKLNPGDTIAKVPRNLDRVGGDITAGLPKVTELFEARIPTDPAIVSEIDGYVSFGSQRRSSKEIKVKNDFGEEKTYYVQVGKHVLATEGDEVKAGDPLTDGAVSPQDILRIQGPNAVQQYLVNEIQKVYQINAGVEINDKHLEVIVRQMLQKVRVEEAGDTNLLPGDLIDRGTFIEANEAVAEKVRVIDRGDAPPRIQEGQLYKQRDITKLNRELRRNSKSLITIEPALQATSHPVLLGITSAALQTESVISAASFQETTKVLTDAAVAGKVDHLAGLKENVIVGKLIPAGTGLRKYRSIRLQSNEPEEVDVIESASTGDAEEEN.

Cys-67, Cys-69, Cys-82, and Cys-85 together coordinate Zn(2+). Asp-499, Asp-501, and Asp-503 together coordinate Mg(2+). Residues Cys-868, Cys-944, Cys-951, and Cys-954 each coordinate Zn(2+).

This sequence belongs to the RNA polymerase beta' chain family. The RNAP catalytic core consists of 2 alpha, 1 beta, 1 beta' and 1 omega subunit. When a sigma factor is associated with the core the holoenzyme is formed, which can initiate transcription. Mg(2+) is required as a cofactor. The cofactor is Zn(2+).

The catalysed reaction is RNA(n) + a ribonucleoside 5'-triphosphate = RNA(n+1) + diphosphate. DNA-dependent RNA polymerase catalyzes the transcription of DNA into RNA using the four ribonucleoside triphosphates as substrates. This Chlorobaculum parvum (strain DSM 263 / NCIMB 8327) (Chlorobium vibrioforme subsp. thiosulfatophilum) protein is DNA-directed RNA polymerase subunit beta'.